The following is a 213-amino-acid chain: Uridine kinase (213 aa).

15-22 (GASASGKS) provides a ligand contact to ATP.

This sequence belongs to the uridine kinase family.

Its subcellular location is the cytoplasm. The catalysed reaction is uridine + ATP = UMP + ADP + H(+). It carries out the reaction cytidine + ATP = CMP + ADP + H(+). It participates in pyrimidine metabolism; CTP biosynthesis via salvage pathway; CTP from cytidine: step 1/3. The protein operates within pyrimidine metabolism; UMP biosynthesis via salvage pathway; UMP from uridine: step 1/1. The chain is Uridine kinase from Enterobacter sp. (strain 638).